A 651-amino-acid polypeptide reads, in one-letter code: Tudor domain-containing protein 3 (651 aa).

Residues 193-233 (LVDEKALKHITEMGFSKEASRQALMDNGNNLEAALNVLLTS) enclose the UBA domain. 3 disordered regions span residues 234-271 (NKQK…SAPS), 287-369 (EEPK…VSEV), and 381-450 (YSRY…TSIP). Ser256 carries the phosphoserine modification. Residues 291–312 (SQPQQLHQGQYRSSNTEQNGVK) show a composition bias toward polar residues. Basic and acidic residues predominate over residues 313–338 (DNNHLRHPPRNDTRQPRNEKPPRFQR). Phosphoserine is present on Ser345. Residue Lys470 forms a Glycyl lysine isopeptide (Lys-Gly) (interchain with G-Cter in SUMO2) linkage. Residues 555 to 615 (MWKPGDECFA…KPIQTEAWEE (61 aa)) form the Tudor domain. A compositionally biased stretch (basic and acidic residues) spans 624–633 (EFRRGGDGQP). A disordered region spans residues 624–651 (EFRRGGDGQPRRSTRPTQQFYQPPRARN). The EBM motif; may mediate interaction with the EJC stretch occupies residues 631–651 (GQPRRSTRPTQQFYQPPRARN).

Component of mRNA stress granules. Interacts with FMR1, FXR1, FXR2, EWSR1, FUS, SERBP1, EEF1A1 and DDX3X or DDX3Y, and with the small nuclear ribonucleoprotein-associated proteins SNRPB and SNRPN. Interacts with 'Lys-48'-linked tetra-ubiquitin, but not with monoubiquitin or 'Lys-63'-linked ubiquitin chains. May interact with the exon junction complex (EJC) composed at least of CASC3, EIF4A3, MAGOH and RBM8A. Interacts with POLR2A (via the C-terminal domain (CTD)). Probably cleaved by enteroviral 2A proteinase. In terms of tissue distribution, detected in heart, brain, placenta, lung, liver, skeletal muscle, kidney and pancreas.

The protein localises to the cytoplasm. The protein resides in the nucleus. Its function is as follows. Scaffolding protein that specifically recognizes and binds dimethylarginine-containing proteins. Plays a role in the regulation of translation of target mRNAs by binding Arg/Gly-rich motifs (GAR) in dimethylarginine-containing proteins. In nucleus, acts as a coactivator: recognizes and binds asymmetric dimethylation on the core histone tails associated with transcriptional activation (H3R17me2a and H4R3me2a) and recruits proteins at these arginine-methylated loci. In cytoplasm, acts as an antiviral factor that participates in the assembly of stress granules together with G3BP1. The sequence is that of Tudor domain-containing protein 3 (TDRD3) from Homo sapiens (Human).